Here is a 373-residue protein sequence, read N- to C-terminus: Aminomethyltransferase (373 aa).

Belongs to the GcvT family. As to quaternary structure, the glycine cleavage system is composed of four proteins: P, T, L and H.

It catalyses the reaction N(6)-[(R)-S(8)-aminomethyldihydrolipoyl]-L-lysyl-[protein] + (6S)-5,6,7,8-tetrahydrofolate = N(6)-[(R)-dihydrolipoyl]-L-lysyl-[protein] + (6R)-5,10-methylene-5,6,7,8-tetrahydrofolate + NH4(+). In terms of biological role, the glycine cleavage system catalyzes the degradation of glycine. The sequence is that of Aminomethyltransferase from Prochlorococcus marinus (strain SARG / CCMP1375 / SS120).